An 883-amino-acid polypeptide reads, in one-letter code: Integrator complex subunit 6-B (883 aa).

The VWFA domain occupies 3–227 (ILLFLLDTSA…QCLESLVQKI (225 aa)). The Inhibitory loop motif lies at 626 to 633 (MMIDEADE).

It belongs to the Integrator subunit 6 family. In terms of assembly, component of the Integrator complex, composed of core subunits INTS1, INTS2, INTS3, INTS4, INTS5, INTS6, INTS7, INTS8, INTS9/RC74, INTS10, INTS11/CPSF3L, INTS12, INTS13, INTS14 and INTS15. The core complex associates with protein phosphatase 2A subunits PPP2CA and PPP2R1A, to form the Integrator-PP2A (INTAC) complex.

Its subcellular location is the nucleus. The protein localises to the chromosome. In terms of biological role, component of the integrator complex, a multiprotein complex that terminates RNA polymerase II (Pol II) transcription in the promoter-proximal region of genes. The integrator complex provides a quality checkpoint during transcription elongation by driving premature transcription termination of transcripts that are unfavorably configured for transcriptional elongation: the complex terminates transcription by (1) catalyzing dephosphorylation of the C-terminal domain (CTD) of Pol II subunit POLR2A/RPB1 and SUPT5H/SPT5, (2) degrading the exiting nascent RNA transcript via endonuclease activity and (3) promoting the release of Pol II from bound DNA. The integrator complex is also involved in terminating the synthesis of non-coding Pol II transcripts, such as enhancer RNAs (eRNAs), small nuclear RNAs (snRNAs), telomerase RNAs and long non-coding RNAs (lncRNAs). Within the integrator complex, INTS6 acts as a molecular adapter that promotes assembly of protein phosphatase 2A (PP2A) subunits to the integrator core complex, promoting recruitment of PP2A to transcription pause-release checkpoint. This is Integrator complex subunit 6-B (ints6-b) from Xenopus laevis (African clawed frog).